A 190-amino-acid polypeptide reads, in one-letter code: Ion-translocating oxidoreductase complex subunit B (190 aa).

The segment at 1-26 (MLTFWLAVATLSALALVAGAVLGFAA) is hydrophobic. Residues 32 to 90 (KTDPVAERIDALLPQSQCAQCGYPGCRPYAEAVAGGAPINKCVPGGEAVMLKIAAQLSV) enclose the 4Fe-4S domain. Residues Cys-49, Cys-52, Cys-57, Cys-73, Cys-115, Cys-118, Cys-121, Cys-125, Cys-145, Cys-148, Cys-151, and Cys-155 each contribute to the [4Fe-4S] cluster site. 2 consecutive 4Fe-4S ferredoxin-type domains span residues 106-135 (RVAW…GATR) and 136-165 (AVHT…MRPL).

The protein belongs to the 4Fe4S bacterial-type ferredoxin family. RnfB subfamily. In terms of assembly, the complex is composed of six subunits: RnfA, RnfB, RnfC, RnfD, RnfE and RnfG. The cofactor is [4Fe-4S] cluster.

It localises to the cell inner membrane. Functionally, part of a membrane-bound complex that couples electron transfer with translocation of ions across the membrane. The protein is Ion-translocating oxidoreductase complex subunit B of Sodalis glossinidius (strain morsitans).